We begin with the raw amino-acid sequence, 315 residues long: Aspartate carbamoyltransferase catalytic subunit (315 aa).

Carbamoyl phosphate-binding residues include Arg-64 and Thr-65. L-aspartate is bound at residue Lys-92. Positions 114, 142, and 145 each coordinate carbamoyl phosphate. L-aspartate is bound by residues Arg-175 and Arg-229. Positions 270 and 271 each coordinate carbamoyl phosphate.

This sequence belongs to the aspartate/ornithine carbamoyltransferase superfamily. ATCase family. Heterododecamer (2C3:3R2) of six catalytic PyrB chains organized as two trimers (C3), and six regulatory PyrI chains organized as three dimers (R2).

The enzyme catalyses carbamoyl phosphate + L-aspartate = N-carbamoyl-L-aspartate + phosphate + H(+). The protein operates within pyrimidine metabolism; UMP biosynthesis via de novo pathway; (S)-dihydroorotate from bicarbonate: step 2/3. In terms of biological role, catalyzes the condensation of carbamoyl phosphate and aspartate to form carbamoyl aspartate and inorganic phosphate, the committed step in the de novo pyrimidine nucleotide biosynthesis pathway. The protein is Aspartate carbamoyltransferase catalytic subunit of Xanthobacter autotrophicus (strain ATCC BAA-1158 / Py2).